The primary structure comprises 504 residues: D-alanine--D-alanyl carrier protein ligase (504 aa).

152-153 (TS) provides a ligand contact to ATP. Asp197 is a binding site for D-alanine. 292–297 (NTYGPT) contacts ATP. Val301 contributes to the D-alanine binding site. Residues Asp383, 394-397 (YNGR), and Lys492 contribute to the ATP site. A D-alanine-binding site is contributed by Lys492.

It belongs to the ATP-dependent AMP-binding enzyme family. DltA subfamily.

The protein localises to the cytoplasm. It carries out the reaction holo-[D-alanyl-carrier protein] + D-alanine + ATP = D-alanyl-[D-alanyl-carrier protein] + AMP + diphosphate. The protein operates within cell wall biogenesis; lipoteichoic acid biosynthesis. In terms of biological role, catalyzes the first step in the D-alanylation of lipoteichoic acid (LTA), the activation of D-alanine and its transfer onto the D-alanyl carrier protein (Dcp) DltC. In an ATP-dependent two-step reaction, forms a high energy D-alanyl-AMP intermediate, followed by transfer of the D-alanyl residue as a thiol ester to the phosphopantheinyl prosthetic group of the Dcp. D-alanylation of LTA plays an important role in modulating the properties of the cell wall in Gram-positive bacteria, influencing the net charge of the cell wall. The protein is D-alanine--D-alanyl carrier protein ligase of Bacillus cereus (strain AH187).